Here is a 108-residue protein sequence, read N- to C-terminus: DNA-directed RNA polymerase III subunit RPC10 (108 aa).

Zn(2+)-binding residues include cysteine 5, cysteine 8, cysteine 25, cysteine 28, cysteine 69, and cysteine 72. The C4-type zinc-finger motif lies at 5–28 (CPGCGNGLIVEEGQRCHRFACNTC). The TFIIS-type zinc finger occupies 65-107 (TAEPCPKCEHPRAYFMQLQTRYADEPMTTFYKCCNAQCGHRWR). A Hairpin motif is present at residues 88 to 89 (DE). 2 residues coordinate Zn(2+): cysteine 98 and cysteine 102.

Belongs to the archaeal RpoM/eukaryotic RPA12/RPB9/RPC11 RNA polymerase family. Component of the RNA polymerase III complex consisting of 17 subunits: a ten-subunit horseshoe-shaped catalytic core composed of POLR3A/RPC1, POLR3B/RPC2, POLR1C/RPAC1, POLR1D/RPAC2, POLR3K/RPC10, POLR2E/RPABC1, POLR2F/RPABC2, POLR2H/RPABC3, POLR2K/RPABC4 and POLR2L/RPABC5; a mobile stalk composed of two subunits POLR3H/RPC8 and CRCP/RPC9, protruding from the core and functioning primarily in transcription initiation; and additional subunits homologous to general transcription factors of the RNA polymerase II machinery, POLR3C/RPC3-POLR3F/RPC6-POLR3G/RPC7 heterotrimer required for transcription initiation and POLR3D/RPC4-POLR3E/RPC5 heterodimer involved in both transcription initiation and termination.

It is found in the nucleus. In terms of biological role, core component of RNA polymerase III (Pol III) which synthesizes small non-coding RNAs using the four ribonucleoside triphosphates as substrates. Can mediate Pol I proofreading of the nascent RNA transcript. Anchors into the Pol III active site to constantly monitor transcription fidelity, cleaves mis-incorporated 5'-ribonucleotides and restarts the transcription process. Once Pol III reaches the poly(dT) termination signal, can induce Pol III clamp opening and transcription termination. Pol III plays an important role in sensing and limiting infection by intracellular bacteria and DNA viruses. Acts as a nuclear and cytosolic DNA sensor involved in innate immune response. Can sense non-self dsDNA that serves as template for transcription into dsRNA. The non-self RNA polymerase III transcripts, such as Epstein-Barr virus-encoded RNAs (EBERs) induce type I interferon and NF-kappa-B through the RIG-I pathway. This is DNA-directed RNA polymerase III subunit RPC10 (POLR3K) from Bos taurus (Bovine).